The primary structure comprises 460 residues: NADH-ubiquinone oxidoreductase chain 4 (460 aa).

Helical transmembrane passes span 20 to 42, 61 to 81, 94 to 113, 114 to 134, 148 to 168, 195 to 215, 225 to 245, 258 to 278, 285 to 304, 308 to 330, 351 to 371, 380 to 400, and 436 to 456; these read SKWL…LTWL, PLST…ILAS, RMYI…AFGA, TKII…LIII, TYFL…LLLL, IWWA…GMHL, PVAG…YGMM, LAYP…LVCL, SLIA…GILI, WGFT…LFCL, MVLP…LALP, LMII…TGMG, and LLMT…ELMW.

This sequence belongs to the complex I subunit 4 family. Core subunit of respiratory chain NADH dehydrogenase (Complex I) which is composed of 45 different subunits.

Its subcellular location is the mitochondrion inner membrane. The enzyme catalyses a ubiquinone + NADH + 5 H(+)(in) = a ubiquinol + NAD(+) + 4 H(+)(out). Core subunit of the mitochondrial membrane respiratory chain NADH dehydrogenase (Complex I) which catalyzes electron transfer from NADH through the respiratory chain, using ubiquinone as an electron acceptor. Essential for the catalytic activity and assembly of complex I. This chain is NADH-ubiquinone oxidoreductase chain 4 (mt-nd4), found in Danio rerio (Zebrafish).